Here is a 494-residue protein sequence, read N- to C-terminus: 3-octaprenyl-4-hydroxybenzoate carboxy-lyase (494 aa).

Asn-172 contributes to the Mn(2+) binding site. Residues 175 to 177 (IYR), 189 to 191 (RWL), and 194 to 195 (RG) each bind prenylated FMN. Residue Glu-238 participates in Mn(2+) binding. Asp-287 functions as the Proton donor in the catalytic mechanism.

This sequence belongs to the UbiD family. In terms of assembly, homohexamer. It depends on prenylated FMN as a cofactor. Mn(2+) is required as a cofactor.

It is found in the cell membrane. It catalyses the reaction a 4-hydroxy-3-(all-trans-polyprenyl)benzoate + H(+) = a 2-(all-trans-polyprenyl)phenol + CO2. The protein operates within cofactor biosynthesis; ubiquinone biosynthesis. In terms of biological role, catalyzes the decarboxylation of 3-octaprenyl-4-hydroxy benzoate to 2-octaprenylphenol, an intermediate step in ubiquinone biosynthesis. This Escherichia coli O9:H4 (strain HS) protein is 3-octaprenyl-4-hydroxybenzoate carboxy-lyase.